We begin with the raw amino-acid sequence, 1077 residues long: Mitogen-activated protein kinase kinase kinase 9 (1077 aa).

The interval 1-40 (MESSRSLLGCLASATAAPPGDDATGAGAEEEEDEEEAAAE) is disordered. Low complexity predominate over residues 14-27 (ATAAPPGDDATGAG). Positions 28–38 (AEEEEDEEEAA) are enriched in acidic residues. In terms of domain architecture, SH3 spans 45–109 (AALPYWTAVF…PSNYVTPRSA (65 aa)). In terms of domain architecture, Protein kinase spans 137–405 (LTLEEIIGIG…LTTIEESGFF (269 aa)). ATP-binding positions include 143–151 (IGIGGFGKV) and K164. The Proton acceptor role is filled by D261. Phosphothreonine; by autocatalysis is present on residues T297 and T298. Phosphoserine; by autocatalysis is present on S301. At T305 the chain carries Phosphothreonine; by autocatalysis. Leucine-zipper regions lie at residues 423–444 (IQEMFDQLRAKEKELRTWEEEL) and 458–479 (LRRREQELAEREIDILERELNI). A compositionally biased stretch (basic residues) spans 491 to 503 (VKKRKGKFRKSRL). 6 disordered regions span residues 491–511 (VKKRKGKFRKSRLKLKDGNRI), 526–606 (SPTM…TSGD), 646–713 (EDED…KRGG), 748–790 (LPPE…KKEE), 860–971 (RDPN…PRPS), and 986–1011 (SHARSASPANSSSTETPSNLDSCFAS). S526 is subject to Phosphoserine. Composition is skewed to polar residues over residues 559-568 (PGESSKTWGR) and 693-709 (PVNSATSTPQLTPTNSL). A compositionally biased stretch (basic and acidic residues) spans 755-767 (PPAREEKKRREGL). Positions 863–880 (NQSLTPTHVTLTAPTQPS) are enriched in polar residues. Over residues 901–915 (GSRSPSSNGMSPSPG) the composition is skewed to low complexity. Residues 987-1011 (HARSASPANSSSTETPSNLDSCFAS) are compositionally biased toward polar residues.

The protein belongs to the protein kinase superfamily. STE Ser/Thr protein kinase family. MAP kinase kinase kinase subfamily. As to quaternary structure, homodimer. Mg(2+) is required as a cofactor. In terms of processing, autophosphorylation on serine and threonine residues within the activation loop plays a role in enzyme activation. Thr-305 is likely to be the main autophosphorylation site. Autophosphorylation also occurs on Thr-297 and Ser-301. Expressed in cochlea and utricle.

It catalyses the reaction L-seryl-[protein] + ATP = O-phospho-L-seryl-[protein] + ADP + H(+). The enzyme catalyses L-threonyl-[protein] + ATP = O-phospho-L-threonyl-[protein] + ADP + H(+). Homodimerization via the leucine zipper domains is required for autophosphorylation of multiple sites in the activation loop and subsequent activation. Autophosphorylation at Thr-305 is the key step in activation of MAP3K9/MLK1 and is required for full phosphorylation. Autophosphorylation at Thr-297 and Ser-301 have been shown to be of secondary importance in the activation of MAP3K9/MLK1. Serine/threonine kinase which acts as an essential component of the MAP kinase signal transduction pathway. Plays an important role in the cascades of cellular responses evoked by changes in the environment. Once activated, acts as an upstream activator of the MKK/JNK signal transduction cascade through the phosphorylation of MAP2K4/MKK4 and MAP2K7/MKK7 which in turn activate the JNKs. The MKK/JNK signaling pathway regulates stress response via activator protein-1 (JUN) and GATA4 transcription factors. Also plays a role in mitochondrial death signaling pathway, including the release cytochrome c, leading to apoptosis. This is Mitogen-activated protein kinase kinase kinase 9 (Map3k9) from Mus musculus (Mouse).